The following is a 503-amino-acid chain: AMP phosphorylase (503 aa).

Residues Gly168, 194–199 (SRAITS), and Thr203 each bind AMP. Asp256 acts as the Proton donor in catalysis. AMP contacts are provided by Ser264 and Lys288.

The protein belongs to the thymidine/pyrimidine-nucleoside phosphorylase family. Type 2 subfamily.

It catalyses the reaction AMP + phosphate = alpha-D-ribose 1,5-bisphosphate + adenine. It carries out the reaction CMP + phosphate = cytosine + alpha-D-ribose 1,5-bisphosphate. The enzyme catalyses UMP + phosphate = alpha-D-ribose 1,5-bisphosphate + uracil. Catalyzes the conversion of AMP and phosphate to adenine and ribose 1,5-bisphosphate (R15P). Exhibits phosphorylase activity toward CMP and UMP in addition to AMP. Functions in an archaeal AMP degradation pathway, together with R15P isomerase and RubisCO. This chain is AMP phosphorylase, found in Pyrococcus furiosus (strain ATCC 43587 / DSM 3638 / JCM 8422 / Vc1).